The primary structure comprises 209 residues: Uracil phosphoribosyltransferase (209 aa).

Residues R79, R104, and 131–139 contribute to the 5-phospho-alpha-D-ribose 1-diphosphate site; that span reads DPMLATGHT. Uracil-binding positions include I194 and 199-201; that span reads GDA. Residue D200 participates in 5-phospho-alpha-D-ribose 1-diphosphate binding.

This sequence belongs to the UPRTase family. The cofactor is Mg(2+).

The catalysed reaction is UMP + diphosphate = 5-phospho-alpha-D-ribose 1-diphosphate + uracil. It functions in the pathway pyrimidine metabolism; UMP biosynthesis via salvage pathway; UMP from uracil: step 1/1. Its activity is regulated as follows. Allosterically activated by GTP. Functionally, catalyzes the conversion of uracil and 5-phospho-alpha-D-ribose 1-diphosphate (PRPP) to UMP and diphosphate. This Caulobacter sp. (strain K31) protein is Uracil phosphoribosyltransferase.